We begin with the raw amino-acid sequence, 269 residues long: 3-methyl-2-oxobutanoate hydroxymethyltransferase (269 aa).

Mg(2+)-binding residues include aspartate 43 and aspartate 82. 3-methyl-2-oxobutanoate is bound by residues 43–44 (DS), aspartate 82, and lysine 110. Glutamate 112 contributes to the Mg(2+) binding site. The active-site Proton acceptor is the glutamate 179.

It belongs to the PanB family. In terms of assembly, homodecamer; pentamer of dimers. Requires Mg(2+) as cofactor.

Its subcellular location is the cytoplasm. The catalysed reaction is 3-methyl-2-oxobutanoate + (6R)-5,10-methylene-5,6,7,8-tetrahydrofolate + H2O = 2-dehydropantoate + (6S)-5,6,7,8-tetrahydrofolate. It participates in cofactor biosynthesis; (R)-pantothenate biosynthesis; (R)-pantoate from 3-methyl-2-oxobutanoate: step 1/2. Functionally, catalyzes the reversible reaction in which hydroxymethyl group from 5,10-methylenetetrahydrofolate is transferred onto alpha-ketoisovalerate to form ketopantoate. The protein is 3-methyl-2-oxobutanoate hydroxymethyltransferase of Acinetobacter baumannii (strain AB307-0294).